The following is a 271-amino-acid chain: Formamidopyrimidine-DNA glycosylase (271 aa).

Pro-2 serves as the catalytic Schiff-base intermediate with DNA. Catalysis depends on Glu-3, which acts as the Proton donor. Lys-58 acts as the Proton donor; for beta-elimination activity in catalysis. DNA-binding residues include His-91 and Arg-109. The FPG-type zinc finger occupies 236 to 270; the sequence is FVYGREGLACRVCATPVRRVVIGQRSTFFCPRCQR. Residue Arg-260 is the Proton donor; for delta-elimination activity of the active site.

The protein belongs to the FPG family. Monomer. Requires Zn(2+) as cofactor.

The catalysed reaction is Hydrolysis of DNA containing ring-opened 7-methylguanine residues, releasing 2,6-diamino-4-hydroxy-5-(N-methyl)formamidopyrimidine.. It catalyses the reaction 2'-deoxyribonucleotide-(2'-deoxyribose 5'-phosphate)-2'-deoxyribonucleotide-DNA = a 3'-end 2'-deoxyribonucleotide-(2,3-dehydro-2,3-deoxyribose 5'-phosphate)-DNA + a 5'-end 5'-phospho-2'-deoxyribonucleoside-DNA + H(+). Its function is as follows. Involved in base excision repair of DNA damaged by oxidation or by mutagenic agents. Acts as a DNA glycosylase that recognizes and removes damaged bases. Has a preference for oxidized purines, such as 7,8-dihydro-8-oxoguanine (8-oxoG). Has AP (apurinic/apyrimidinic) lyase activity and introduces nicks in the DNA strand. Cleaves the DNA backbone by beta-delta elimination to generate a single-strand break at the site of the removed base with both 3'- and 5'-phosphates. The protein is Formamidopyrimidine-DNA glycosylase of Aromatoleum aromaticum (strain DSM 19018 / LMG 30748 / EbN1) (Azoarcus sp. (strain EbN1)).